Reading from the N-terminus, the 393-residue chain is tRNA(Met) cytidine acetate ligase (393 aa).

Residues glycine 81, asparagine 142, and arginine 167 each coordinate ATP.

The protein belongs to the TmcAL family.

Its subcellular location is the cytoplasm. It carries out the reaction cytidine(34) in elongator tRNA(Met) + acetate + ATP = N(4)-acetylcytidine(34) in elongator tRNA(Met) + AMP + diphosphate. Its function is as follows. Catalyzes the formation of N(4)-acetylcytidine (ac(4)C) at the wobble position of elongator tRNA(Met), using acetate and ATP as substrates. First activates an acetate ion to form acetyladenylate (Ac-AMP) and then transfers the acetyl group to tRNA to form ac(4)C34. The protein is tRNA(Met) cytidine acetate ligase of Bacillus thuringiensis subsp. konkukian (strain 97-27).